Here is a 509-residue protein sequence, read N- to C-terminus: Lengsin (509 aa).

Residues 1–34 (MNNEEDLLQEDSTRDEGNETEANSMNTLRRTRKK) form a disordered region. One can recognise a GS beta-grasp domain in the interval 83 to 177 (NRLQFVRFEA…VICDTFTVTG (95 aa)). Residues 184–509 (PRYIAKRQLS…ERNKFLEYFI (326 aa)) enclose the GS catalytic domain.

It belongs to the glutamine synthetase family. In terms of assembly, dodecamer. Interacts with BFSP2 and VIM. Abundantly expressed in lens.

May act as a component of the cytoskeleton or as a chaperone for the reorganization of intermediate filament proteins during terminal differentiation in the lens. Does not seem to have enzymatic activity. This is Lengsin (LGSN) from Homo sapiens (Human).